We begin with the raw amino-acid sequence, 100 residues long: Small ribosomal subunit protein uS14 (100 aa).

It belongs to the universal ribosomal protein uS14 family. Part of the 30S ribosomal subunit. Contacts proteins S3 and S10.

Its function is as follows. Binds 16S rRNA, required for the assembly of 30S particles and may also be responsible for determining the conformation of the 16S rRNA at the A site. In Picosynechococcus sp. (strain ATCC 27264 / PCC 7002 / PR-6) (Agmenellum quadruplicatum), this protein is Small ribosomal subunit protein uS14.